Here is a 339-residue protein sequence, read N- to C-terminus: Serine/arginine-rich splicing factor 6 (339 aa).

The region spanning 2–72 (PRVYIGRLSY…ERVIVEHARG (71 aa)) is the RRM 1 domain. 3 positions are modified to phosphoserine: serine 45, serine 81, and serine 84. The disordered stretch occupies residues 75-103 (RDRDGYSYGSRSGGGGYSSRRTSGRDKYG). The 74-residue stretch at 110-183 (YRLIVENLSS…RNIRLIEDKP (74 aa)) folds into the RRM 2 domain. Lysine 165 bears the N6-acetyllysine mark. Residues 176 to 339 (IRLIEDKPRT…RSRSRSSSRD (164 aa)) form a disordered region. Residue lysine 182 forms a Glycyl lysine isopeptide (Lys-Gly) (interchain with G-Cter in SUMO2) linkage. Positions 185-250 (TSHRRSYSGS…RKSRSKSKSK (66 aa)) are enriched in basic residues. The span at 280–291 (SPKENGKGDIKS) shows a compositional bias: basic and acidic residues. Residues serine 297 and serine 299 each carry the phosphoserine modification. A Phosphoserine; by DYRK1A modification is found at serine 303. A phosphoserine mark is found at serine 314 and serine 316. Basic residues predominate over residues 321–339 (RASRSRSRSRSRSRSSSRD).

This sequence belongs to the splicing factor SR family. As to quaternary structure, binds SREK1/SFRS12. Interacts with DYRK1A. Interacts with RBMY; the interaction inhibits SRSF6 pre-mRNA splicing. Post-translationally, extensively phosphorylated on serine residues in the RS domain. Phosphorylated by DYRK1A, probably in the RS domain. Phosphorylation by DYRK1A modulates alternative splice site selection and inhibits the expression of MAPT/Tau exon 10.

It is found in the nucleus. Its subcellular location is the nucleus speckle. Functionally, plays a role in constitutive splicing and modulates the selection of alternative splice sites. Plays a role in the alternative splicing of MAPT/Tau exon 10. Binds to alternative exons of TNC pre-mRNA and promotes the expression of alternatively spliced TNC. Plays a role in wound healing and in the regulation of keratinocyte differentiation and proliferation via its role in alternative splicing. The chain is Serine/arginine-rich splicing factor 6 (Srsf6) from Mus musculus (Mouse).